A 1172-amino-acid polypeptide reads, in one-letter code: DNA-directed RNA polymerase subunit beta (1172 aa).

This sequence belongs to the RNA polymerase beta chain family. The RNAP catalytic core consists of 2 alpha, 1 beta, 1 beta' and 1 omega subunit. When a sigma factor is associated with the core the holoenzyme is formed, which can initiate transcription.

The catalysed reaction is RNA(n) + a ribonucleoside 5'-triphosphate = RNA(n+1) + diphosphate. DNA-dependent RNA polymerase catalyzes the transcription of DNA into RNA using the four ribonucleoside triphosphates as substrates. The sequence is that of DNA-directed RNA polymerase subunit beta from Thermosipho melanesiensis (strain DSM 12029 / CIP 104789 / BI429).